The following is a 288-amino-acid chain: UPF0761 membrane protein HSM_1104 (288 aa).

6 helical membrane-spanning segments follow: residues Thr36 to Phe56, Gln92 to Ile112, Pro127 to Ala147, Leu176 to Val196, Lys200 to Gly220, and Ala240 to Leu260.

The protein belongs to the UPF0761 family.

Its subcellular location is the cell inner membrane. This chain is UPF0761 membrane protein HSM_1104, found in Histophilus somni (strain 2336) (Haemophilus somnus).